A 492-amino-acid chain; its full sequence is Tumor necrosis factor receptor superfamily member 8 (492 aa).

A signal peptide spans 1 to 18 (MSILLKAAGLLFLGMLQA). Residues 19–282 (FPKDRPLDTT…STGTPFLDPG (264 aa)) lie on the Extracellular side of the membrane. TNFR-Cys repeat units follow at residues 57 to 104 (PCPQ…PRIC) and 105 to 141 (ECQP…NTIC). 4 disulfides stabilise this stretch: C58-C80, C83-C96, C86-C104, and C123-C141. The segment at 141 to 178 (CDLPSPGSGPNGSNPDDCKTLTSHTTPQAIPTLESPAN) is disordered. A compositionally biased stretch (low complexity) spans 144 to 155 (PSPGSGPNGSNP). 3 N-linked (GlcNAc...) asparagine glycosylation sites follow: N151, N178, and N224. Polar residues predominate over residues 160 to 178 (TLTSHTTPQAIPTLESPAN). A helical membrane pass occupies residues 283–303 (SMLFWVAMVVLLVGSASFLLC). Residues 304-492 (YWKACRRRFQ…DHEPTTVSEK (189 aa)) are Cytoplasmic-facing. A phosphoserine mark is found at S334 and S348. 2 disordered regions span residues 336–366 (PTEK…PPAV) and 432–492 (PEGR…VSEK). Polar residues predominate over residues 339 to 360 (KLTQLQRSGSVTDSSAGHTLSP). Basic and acidic residues-rich tracts occupy residues 450-459 (EVDHTPHYPE) and 478-492 (EGGK…VSEK).

Belongs to the TNFR8 family. As to quaternary structure, interacts with TRAF1, TRAF2, TRAF3 and TRAF5. As to expression, very low level of expression. Detected in spleen, thymus and lung. Highly expressed in HTLV-1 infected T-cell lines.

Its subcellular location is the cell membrane. In terms of biological role, receptor for TNFSF8/CD30L. May play a role in the regulation of cellular growth and transformation of activated lymphoblasts. Regulates gene expression through activation of NF-kappa-B. This Rattus norvegicus (Rat) protein is Tumor necrosis factor receptor superfamily member 8.